A 118-amino-acid polypeptide reads, in one-letter code: MKRMAGVLGVVLGVFALFGSGKSVDYGDWCPKGKSLGKDIYVEGIVDYEGKNWCKVVVRTPYSVTEVYYTPDGSGEKVVKYKNGKKMAEIELVENQVYLRLYDKNGKVVEEIKSREEF.

This is an uncharacterized protein from Aquifex aeolicus (strain VF5).